Reading from the N-terminus, the 344-residue chain is L-rhamnose-proton symporter (344 aa).

The next 10 helical transmembrane spans lie at 4–24 (AITM…CFYA), 38–58 (WSVG…ALLL), 68–88 (FSLS…IGNI), 101–121 (MGIG…TPII), 137–157 (TLLG…AGQL), 175–195 (LVLA…MNAA), 214–234 (LPSY…FCFI), 259–279 (VLLS…YAWG), 290–310 (ISWM…GLVL), and 323–343 (VLSL…IGMA).

It belongs to the L-rhamnose transporter (TC 2.A.7.6) family.

The protein resides in the cell inner membrane. It carries out the reaction L-rhamnopyranose(in) + H(+)(in) = L-rhamnopyranose(out) + H(+)(out). Its function is as follows. Uptake of L-rhamnose across the cytoplasmic membrane with the concomitant transport of protons into the cell (symport system). In Escherichia coli (strain ATCC 8739 / DSM 1576 / NBRC 3972 / NCIMB 8545 / WDCM 00012 / Crooks), this protein is L-rhamnose-proton symporter.